The primary structure comprises 406 residues: Propionate kinase (406 aa).

Residues asparagine 11 and lysine 18 each coordinate ATP. Asparagine 11 serves as a coordination point for Mg(2+). Arginine 86 contacts substrate. Aspartate 143 acts as the Proton donor/acceptor in catalysis. ATP is bound by residues histidine 175, 203–207, 278–280, and 326–330; these read HLGNG, DMR, and GIGEN.

The protein belongs to the acetokinase family. TdcD subfamily. Homodimer. Mg(2+) is required as a cofactor.

It carries out the reaction propanoate + ATP = propanoyl phosphate + ADP. It participates in amino-acid degradation; L-threonine degradation via propanoate pathway; propanoate from L-threonine: step 4/4. Its function is as follows. Catalyzes the conversion of propionyl phosphate and ADP to propionate and ATP. The polypeptide is Propionate kinase (Yersinia enterocolitica serotype O:8 / biotype 1B (strain NCTC 13174 / 8081)).